The primary structure comprises 403 residues: Acetylornithine aminotransferase (403 aa).

Pyridoxal 5'-phosphate contacts are provided by residues 107–108 (GA) and Phe140. Arg143 is a N(2)-acetyl-L-ornithine binding site. 225-228 (DEVQ) is a binding site for pyridoxal 5'-phosphate. Lys254 bears the N6-(pyridoxal phosphate)lysine mark. Residue Ser282 participates in N(2)-acetyl-L-ornithine binding. Residue Thr283 participates in pyridoxal 5'-phosphate binding.

It belongs to the class-III pyridoxal-phosphate-dependent aminotransferase family. ArgD subfamily. Homodimer. The cofactor is pyridoxal 5'-phosphate.

It localises to the cytoplasm. It catalyses the reaction N(2)-acetyl-L-ornithine + 2-oxoglutarate = N-acetyl-L-glutamate 5-semialdehyde + L-glutamate. It functions in the pathway amino-acid biosynthesis; L-arginine biosynthesis; N(2)-acetyl-L-ornithine from L-glutamate: step 4/4. The chain is Acetylornithine aminotransferase from Vibrio cholerae serotype O1 (strain ATCC 39315 / El Tor Inaba N16961).